The following is a 440-amino-acid chain: Xylose isomerase (440 aa).

Catalysis depends on residues His-101 and Asp-104. Mg(2+) is bound by residues Glu-232, Glu-268, His-271, Asp-296, Asp-307, Asp-309, and Asp-339.

This sequence belongs to the xylose isomerase family. Homotetramer. It depends on Mg(2+) as a cofactor.

It is found in the cytoplasm. The catalysed reaction is alpha-D-xylose = alpha-D-xylulofuranose. The protein is Xylose isomerase of Salmonella dublin (strain CT_02021853).